The primary structure comprises 21 residues: Misgurin (21 aa).

The tract at residues 1–21 is disordered; it reads RQRVEELSKFSKKGAAARRRK. Residues 10–21 are compositionally biased toward basic residues; that stretch reads FSKKGAAARRRK.

It is found in the secreted. Functionally, strong antimicrobial activity against several Gram-positive and Gram-negative bacteria and fungi. The chain is Misgurin from Misgurnus anguillicaudatus (Oriental weatherloach).